We begin with the raw amino-acid sequence, 614 residues long: Sulfite reductase [NADPH] flavoprotein alpha-component (614 aa).

Positions 79 to 217 (LTIIFASQTG…AATEWRKQVL (139 aa)) constitute a Flavodoxin-like domain. FMN-binding positions include 85–90 (SQTGNA), 132–135 (STNG), and 168–177 (LGDSSYQFFC). Positions 249–463 (EQPYTASLST…VEHNNNFKLP (215 aa)) constitute an FAD-binding FR-type domain. Residues Thr337, Thr371, 401–404 (RLYS), 419–421 (TVG), Tyr425, and 434–437 (GGAS) contribute to the FAD site. Residues 534–535 (SR), 540–544 (KVYVQ), and Asp576 each bind NADP(+). Tyr614 contributes to the FAD binding site.

Belongs to the NADPH-dependent sulphite reductase flavoprotein subunit CysJ family. This sequence in the N-terminal section; belongs to the flavodoxin family. The protein in the C-terminal section; belongs to the flavoprotein pyridine nucleotide cytochrome reductase family. As to quaternary structure, alpha(8)-beta(8). The alpha component is a flavoprotein, the beta component is a hemoprotein. FAD is required as a cofactor. Requires FMN as cofactor.

The enzyme catalyses hydrogen sulfide + 3 NADP(+) + 3 H2O = sulfite + 3 NADPH + 4 H(+). The protein operates within sulfur metabolism; hydrogen sulfide biosynthesis; hydrogen sulfide from sulfite (NADPH route): step 1/1. Functionally, component of the sulfite reductase complex that catalyzes the 6-electron reduction of sulfite to sulfide. This is one of several activities required for the biosynthesis of L-cysteine from sulfate. The flavoprotein component catalyzes the electron flow from NADPH -&gt; FAD -&gt; FMN to the hemoprotein component. This chain is Sulfite reductase [NADPH] flavoprotein alpha-component, found in Vibrio cholerae serotype O1 (strain ATCC 39541 / Classical Ogawa 395 / O395).